Consider the following 73-residue polypeptide: Signaling peptide TAXIMIN 2 (73 aa).

Residues 1-27 form the signal peptide; that stretch reads MGDCRPLGFLIGLPFALVALVLALVGA.

In terms of tissue distribution, confined to the vasculature of various organs, including seedling roots, leaves, cotyledons, sepals and petals. Also accumulates in root hair cells.

Its subcellular location is the secreted. Signaling peptide involved in the regulation of lateral organs separation. This is Signaling peptide TAXIMIN 2 from Arabidopsis thaliana (Mouse-ear cress).